Reading from the N-terminus, the 263-residue chain is Glucosamine-6-phosphate deaminase (263 aa).

Asp67 acts as the Proton acceptor; for enolization step in catalysis. Asn136 (for ring-opening step) is an active-site residue. The active-site Proton acceptor; for ring-opening step is the His138. The For ring-opening step role is filled by Glu143.

This sequence belongs to the glucosamine/galactosamine-6-phosphate isomerase family. NagB subfamily. As to quaternary structure, homohexamer.

It carries out the reaction alpha-D-glucosamine 6-phosphate + H2O = beta-D-fructose 6-phosphate + NH4(+). The protein operates within amino-sugar metabolism; N-acetylneuraminate degradation; D-fructose 6-phosphate from N-acetylneuraminate: step 5/5. Its function is as follows. Catalyzes the reversible isomerization-deamination of glucosamine 6-phosphate (GlcN6P) to form fructose 6-phosphate (Fru6P) and ammonium ion. The polypeptide is Glucosamine-6-phosphate deaminase (Shewanella halifaxensis (strain HAW-EB4)).